Reading from the N-terminus, the 327-residue chain is MNWLTNVVRPKIRNILRRETPENLWIKCPDTGQLVFYKDVEQNQFVIPGSNYHMRMGAVARLRAIFDNETWYDVALPEVVADPLKFRDERKYADRIKDARTKTGAHDAVRVGFGKLETSPVVVAVQDFDFMGGSLGMAAGEAIIRGMELAVEKHAPFIMFAASGGARMQEGILSLMQMPRTTVAVQMLREAKLPYIVVLTNPTTGGVTASYAMLGDIHIAEPGALIGFAGARVIEQTIREKLPDGFQRAEYLKEHGMVDMVVHRHDLRPTLARLCRLLTKSPALTVTTAVEAPAEAAAKAEPEATTTEQPGAPAPTEPPAQPAAPQA.

In terms of domain architecture, CoA carboxyltransferase N-terminal spans 24–293 (LWIKCPDTGQ…LTVTTAVEAP (270 aa)). The span at 293 to 311 (PAEAAAKAEPEATTTEQPG) shows a compositional bias: low complexity. The interval 293–327 (PAEAAAKAEPEATTTEQPGAPAPTEPPAQPAAPQA) is disordered. Over residues 312–327 (APAPTEPPAQPAAPQA) the composition is skewed to pro residues.

Belongs to the AccD/PCCB family. Acetyl-CoA carboxylase is a heterohexamer composed of biotin carboxyl carrier protein (AccB), biotin carboxylase (AccC) and two subunits each of ACCase subunit alpha (AccA) and ACCase subunit beta (AccD).

The protein resides in the cytoplasm. The enzyme catalyses N(6)-carboxybiotinyl-L-lysyl-[protein] + acetyl-CoA = N(6)-biotinyl-L-lysyl-[protein] + malonyl-CoA. It functions in the pathway lipid metabolism; malonyl-CoA biosynthesis; malonyl-CoA from acetyl-CoA: step 1/1. Component of the acetyl coenzyme A carboxylase (ACC) complex. Biotin carboxylase (BC) catalyzes the carboxylation of biotin on its carrier protein (BCCP) and then the CO(2) group is transferred by the transcarboxylase to acetyl-CoA to form malonyl-CoA. In Rhodopseudomonas palustris (strain ATCC BAA-98 / CGA009), this protein is Acetyl-coenzyme A carboxylase carboxyl transferase subunit beta.